The following is a 376-amino-acid chain: Protein-tyrosine sulfotransferase 2 (376 aa).

Over 1–8 (MRLSVRKV) the chain is Cytoplasmic. Residues 9 to 25 (LLAVGCALALVLAVQLG) form a helical; Signal-anchor for type II membrane protein membrane-spanning segment. Residues 26 to 376 (QQVLECRAVL…NSTSPHLGSS (351 aa)) are Lumenal-facing. Position 77 to 81 (77 to 81 (RSGTT)) interacts with 3'-phosphoadenylyl sulfate. A disulfide bond links Cys-95 and Cys-155. Glu-98 acts as the Proton donor/acceptor in catalysis. Residues 100-104 (RIIPR) are interaction with peptide substrate. 3'-phosphoadenylyl sulfate contacts are provided by Arg-182, Ser-190, and Arg-194. Cys-224 and Cys-232 are disulfide-bonded. Residues Tyr-237, 284-293 (STDQVIKPVN), and Lys-299 each bind 3'-phosphoadenylyl sulfate. Asn-342 and Asn-367 each carry an N-linked (GlcNAc...) asparagine glycan.

It belongs to the protein sulfotransferase family. As to quaternary structure, homodimer. Can also form heterodimers with TPST1. In terms of processing, N-glycosylated.

The protein resides in the golgi apparatus membrane. The enzyme catalyses L-tyrosyl-[protein] + 3'-phosphoadenylyl sulfate = O-sulfo-L-tyrosine-[protein] + adenosine 3',5'-bisphosphate + H(+). In terms of biological role, catalyzes the O-sulfation of tyrosine residues within acidic motifs of polypeptides, using 3'-phosphoadenylyl sulfate (PAPS) as cosubstrate. This chain is Protein-tyrosine sulfotransferase 2 (Tpst2), found in Rattus norvegicus (Rat).